We begin with the raw amino-acid sequence, 423 residues long: Cell adhesion molecule CEACAM16 (423 aa).

Positions 1–22 (MKMPLTWGSWFLLSAWILNAGA) are cleaved as a signal peptide. Asn-38 carries an N-linked (GlcNAc...) asparagine glycan. The disordered stretch occupies residues 77–96 (ETPGPAHTGREAVRPDGSLD). The segment covering 84–95 (TGREAVRPDGSL) has biased composition (basic and acidic residues). 2 consecutive Ig-like C2-type domains span residues 134-219 (PPTV…LNLT) and 224-310 (PERV…ASVV). An intrachain disulfide couples Cys-155 to Cys-202. N-linked (GlcNAc...) asparagine glycosylation occurs at Asn-217. Cys-253 and Cys-294 form a disulfide bridge.

This sequence belongs to the immunoglobulin superfamily. CEA family. As to quaternary structure, homooligomer; can for homodimers and homotetramers. Interacts with TECTA and TECTB.

It is found in the secreted. Functionally, required for proper hearing, plays a role in maintaining the integrity of the tectorial membrane. The polypeptide is Cell adhesion molecule CEACAM16 (Rattus norvegicus (Rat)).